We begin with the raw amino-acid sequence, 160 residues long: Cytochrome b6-f complex subunit 4 (160 aa).

3 helical membrane-spanning segments follow: residues 36-56, 95-115, and 131-151; these read LLYI…GLAV, LLGI…PFIE, and TVFL…ALPI.

This sequence belongs to the cytochrome b family. PetD subfamily. The 4 large subunits of the cytochrome b6-f complex are cytochrome b6, subunit IV (17 kDa polypeptide, PetD), cytochrome f and the Rieske protein, while the 4 small subunits are PetG, PetL, PetM and PetN. The complex functions as a dimer.

It localises to the cellular thylakoid membrane. Component of the cytochrome b6-f complex, which mediates electron transfer between photosystem II (PSII) and photosystem I (PSI), cyclic electron flow around PSI, and state transitions. The sequence is that of Cytochrome b6-f complex subunit 4 from Parasynechococcus marenigrum (strain WH8102).